Consider the following 194-residue polypeptide: MDRILTKEEKQALISLLDLEPQYWGDYGRMQKCYKKKCLQLHPDKGGNEELMQQLNTLWTKLKDGLYRVRLLLGPSQVRRLGKDQWNLSLQQTFSGTYFRRLCRLPITCLRNKGISTCNCILCLLRKQHFLLKKSWRVPCLVLGECYCIDCFALWFGLPVTNMLVPLYAQFLAPIPVDWLDLNVHEVYNPASGP.

N-acetylmethionine; by host is present on M1. The 64-residue stretch at 12-75 folds into the J domain; sequence ALISLLDLEP…LYRVRLLLGP (64 aa). The C4-type; atypical zinc finger occupies 109 to 123; it reads CLRNKGISTCNCILC. The segment at 129–151 adopts an H1C3-type; atypical zinc-finger fold; it reads HFLLKKSWRVPCLVLGECYCIDC.

In terms of assembly, interacts with host PPP2R1A; the interaction inhibits PP2A activity.

The protein resides in the host cytoplasm. It is found in the host nucleus. In terms of biological role, promotes efficient viral genome replication by accelerating both G1 and S phase progression of the cell cycle. Inhibits host PP2A by binding to the A subunit, thereby displacing lower affinity regulatory B subunit. Inactivation of PP2A in turn results in the transactivation of cyclin A and cyclin D1 promoters. Late during the infection cycle, ST may induce dephosphorylation of host MTOR, leading to the inhibition of cap-dependent translation. May establish and maintain high levels of viral genomes during persistent infection in cell culture. In Mesocricetus auratus (Golden hamster), this protein is Small t antigen.